We begin with the raw amino-acid sequence, 869 residues long: MKSSEIREKFLKFFESKGHTIVASSPLVPGNDPTLMFTNSGMVQFKDVFLGEDKRPYVRATSVQACLRAGGKHNDLENVGYTARHHTFFEMLGNWSFGDYFKRDALMWSWELLTKVYGLPGDKLLATVYIEDQEAYDIWTKEIGLPPERVIRIGDNKGGRYKSDNFWMMADTGPCGPCSEIFYDHGPHIAGGPPGSPDEDGDRYIEIWNNVFMQFDMAEDGTVKPLPAPCVDTGMGLERLAAILQGVHSNYEIDTFAALIKAAGRETNTKDLTNNSLKVIADHIRATAFLVADGVIPSNEGRGYVQRRIIRRAIRHGYKLGQKKPFFHKLVKDLVEQMGEAYPKLQADAQRITEVLKAEEERFFETLANGMEILDAALAGGVKVLPGEVAFKLHDTFGFPLDLSADVCREAGVSVDEAGFAAAMEKQKAAGRAAGKFKMERAVEYTGAGNVFTGYENLQEDATVVGLYFEGTAVQQLKEGQAGIVVLDTTPFYAESGGQVGDQGFVSAEGVQFGVEDTQKIKADVYGHHGVQTQGTLKVGDKVQAAVDGARRAATMRNHSVTHIMHKALREVLGEHVQQKGSLVDAEKTRFDFAHNAPVTHEQILEIEKRVNAEILANSDTQARVMDIESAQKTGAMMLFGEKYGETVRVLDIGSSRELCGGTHVSRTGDIGLFKVVGESGVAAGVRRIEAITGANALSYFQDLEATVHSAAATLKSPPAELQPRLAQVLDQVKTLEREINALKGKLASSQGDELLSQAVEIKGIKVLAAKLENADAGTLRTTMDTLKDKLKTAAIVLAAVNDGKVSLIAGVTADATGKVKAGELVNFVAQQVGGKGGGRADMAQAGGTDASGLPAALQGVAAWVAERA.

Zn(2+) contacts are provided by H559, H563, C660, and H664.

This sequence belongs to the class-II aminoacyl-tRNA synthetase family. Requires Zn(2+) as cofactor.

It localises to the cytoplasm. It carries out the reaction tRNA(Ala) + L-alanine + ATP = L-alanyl-tRNA(Ala) + AMP + diphosphate. In terms of biological role, catalyzes the attachment of alanine to tRNA(Ala) in a two-step reaction: alanine is first activated by ATP to form Ala-AMP and then transferred to the acceptor end of tRNA(Ala). Also edits incorrectly charged Ser-tRNA(Ala) and Gly-tRNA(Ala) via its editing domain. The chain is Alanine--tRNA ligase from Herminiimonas arsenicoxydans.